Consider the following 160-residue polypeptide: Cytochrome b6-f complex subunit 4 (160 aa).

The next 3 helical transmembrane spans lie at 36–56 (ILYMFPVVILGILACDVGLSI), 95–115 (LVGVLSMASVPAGLITVPFIE), and 127–147 (PIATSVFLVGTIVAVWLGIGA).

This sequence belongs to the cytochrome b family. PetD subfamily. The 4 large subunits of the cytochrome b6-f complex are cytochrome b6, subunit IV (17 kDa polypeptide, petD), cytochrome f and the Rieske protein, while the 4 small subunits are petG, petL, petM and petN. The complex functions as a dimer.

The protein resides in the plastid. The protein localises to the chloroplast thylakoid membrane. In terms of biological role, component of the cytochrome b6-f complex, which mediates electron transfer between photosystem II (PSII) and photosystem I (PSI), cyclic electron flow around PSI, and state transitions. This is Cytochrome b6-f complex subunit 4 from Gracilaria tenuistipitata var. liui (Red alga).